Here is a 316-residue protein sequence, read N- to C-terminus: 4-hydroxy-3-methylbut-2-enyl diphosphate reductase (316 aa).

Cysteine 12 is a [4Fe-4S] cluster binding site. The (2E)-4-hydroxy-3-methylbut-2-enyl diphosphate site is built by histidine 41 and histidine 74. Residues histidine 41 and histidine 74 each coordinate dimethylallyl diphosphate. Isopentenyl diphosphate-binding residues include histidine 41 and histidine 74. A [4Fe-4S] cluster-binding site is contributed by cysteine 96. Histidine 124 provides a ligand contact to (2E)-4-hydroxy-3-methylbut-2-enyl diphosphate. Histidine 124 contacts dimethylallyl diphosphate. Isopentenyl diphosphate is bound at residue histidine 124. Glutamate 126 functions as the Proton donor in the catalytic mechanism. Threonine 169 is a binding site for (2E)-4-hydroxy-3-methylbut-2-enyl diphosphate. Cysteine 199 provides a ligand contact to [4Fe-4S] cluster. The (2E)-4-hydroxy-3-methylbut-2-enyl diphosphate site is built by serine 227, serine 228, asparagine 229, and serine 271. Dimethylallyl diphosphate-binding residues include serine 227, serine 228, asparagine 229, and serine 271. The isopentenyl diphosphate site is built by serine 227, serine 228, asparagine 229, and serine 271.

Belongs to the IspH family. [4Fe-4S] cluster is required as a cofactor.

It catalyses the reaction isopentenyl diphosphate + 2 oxidized [2Fe-2S]-[ferredoxin] + H2O = (2E)-4-hydroxy-3-methylbut-2-enyl diphosphate + 2 reduced [2Fe-2S]-[ferredoxin] + 2 H(+). The enzyme catalyses dimethylallyl diphosphate + 2 oxidized [2Fe-2S]-[ferredoxin] + H2O = (2E)-4-hydroxy-3-methylbut-2-enyl diphosphate + 2 reduced [2Fe-2S]-[ferredoxin] + 2 H(+). Its pathway is isoprenoid biosynthesis; dimethylallyl diphosphate biosynthesis; dimethylallyl diphosphate from (2E)-4-hydroxy-3-methylbutenyl diphosphate: step 1/1. The protein operates within isoprenoid biosynthesis; isopentenyl diphosphate biosynthesis via DXP pathway; isopentenyl diphosphate from 1-deoxy-D-xylulose 5-phosphate: step 6/6. In terms of biological role, catalyzes the conversion of 1-hydroxy-2-methyl-2-(E)-butenyl 4-diphosphate (HMBPP) into a mixture of isopentenyl diphosphate (IPP) and dimethylallyl diphosphate (DMAPP). Acts in the terminal step of the DOXP/MEP pathway for isoprenoid precursor biosynthesis. This chain is 4-hydroxy-3-methylbut-2-enyl diphosphate reductase, found in Xanthomonas axonopodis pv. citri (strain 306).